The sequence spans 519 residues: F-box-like/WD repeat-containing protein TBL1XR1-A (519 aa).

The LisH domain maps to 4–36 (SSDEVNFLVYRYLQESGFSHSAFTFGIESHISQ). The region spanning 41–86 (GALAPPAALISIIQKGLQYVEAEVSINEDGTLFDGRPIESLSLIDA) is the F-box-like domain. Low complexity predominate over residues 115 to 139 (AAAAAATPNNQQPPAKNGENTANGE). Residues 115–147 (AAAAAATPNNQQPPAKNGENTANGEENGGHALA) form a disordered region. WD repeat units follow at residues 172-211 (GHES…TSGS), 228-267 (PSNK…ASTL), 269-308 (QHKG…AKQQ), 311-349 (FHSA…PIKT), 352-391 (GHTN…CVHD), 394-442 (AHNK…CIHT), 445-484 (KHQE…LVHS), and 486-519 (RGTG…DLRK).

Belongs to the WD repeat EBI family. As to quaternary structure, interacts with heterodimers of rxra and thrb, and this interaction is abrogated by thyroid hormone binding to thrb. Interacts with ncor1.

The protein resides in the nucleus. Its function is as follows. F-box-like protein which acts as an integral component of the N-CoR transcriptional corepressor complex. Probably regulates transcription activation mediated by nuclear receptors. May mediate the recruitment of the 19S proteasome complex, leading to the subsequent proteasomal degradation of the N-CoR complex, thereby allowing cofactor exchange and transcription activation. The polypeptide is F-box-like/WD repeat-containing protein TBL1XR1-A (tbl1xr1-a) (Xenopus laevis (African clawed frog)).